A 277-amino-acid polypeptide reads, in one-letter code: Myelin proteolipid protein (277 aa).

Residues 2 to 10 (GLLECCARC) are Cytoplasmic-facing. S-palmitoyl cysteine attachment occurs at residues cysteine 6, cysteine 7, and cysteine 10. A helical membrane pass occupies residues 11 to 36 (LIGAPFASLVATGLCFFGVALFCGCG). Topologically, residues 37-59 (HEALTGTEQLIETYFSKNYQDYE) are extracellular. Residues 60–88 (YLIDVIHAFQYVIYGTASFFFLYGALLLA) traverse the membrane as a helical segment. Over 89-151 (EGFYTTGAVR…LGKWLGHPDK (63 aa)) the chain is Cytoplasmic. 3 S-palmitoyl cysteine lipidation sites follow: cysteine 109, cysteine 139, and cysteine 141. A helical membrane pass occupies residues 152 to 178 (FVGITYVLTIVWLLAFACSAVPVYIYF). Residues 179–238 (NTWTTCQSIAFPTKTTASIGTLCADARMYGVLPWNAFPGKVCGSNLLSICKTSEFQMTFH) lie on the Extracellular side of the membrane. Disulfide bonds link cysteine 184–cysteine 228 and cysteine 201–cysteine 220. Threonine 199 is lipidated: O-palmitoyl threonine. A helical membrane pass occupies residues 239–268 (LFIAAFVGAAATLVSLLTFMIAATYNFAVL). Residues 269–277 (KLMGRGTKF) lie on the Cytoplasmic side of the membrane.

It belongs to the myelin proteolipid protein family.

The protein resides in the cell membrane. This is the major myelin protein from the central nervous system. It plays an important role in the formation or maintenance of the multilamellar structure of myelin. In Gallus gallus (Chicken), this protein is Myelin proteolipid protein (PLP1).